The following is a 510-amino-acid chain: Histidine ammonia-lyase (510 aa).

A cross-link (5-imidazolinone (Ala-Gly)) is located at residues 143-145; sequence ASG. Ser-144 carries the 2,3-didehydroalanine (Ser) modification.

The protein belongs to the PAL/histidase family. Contains an active site 4-methylidene-imidazol-5-one (MIO), which is formed autocatalytically by cyclization and dehydration of residues Ala-Ser-Gly.

It is found in the cytoplasm. The enzyme catalyses L-histidine = trans-urocanate + NH4(+). It participates in amino-acid degradation; L-histidine degradation into L-glutamate; N-formimidoyl-L-glutamate from L-histidine: step 1/3. This Photobacterium profundum (strain SS9) protein is Histidine ammonia-lyase.